We begin with the raw amino-acid sequence, 905 residues long: DNA gyrase subunit A (905 aa).

Positions 35-524 (IPDVRDGLKP…GEFDQDIEDL (490 aa)) constitute a Topo IIA-type catalytic domain. The active-site O-(5'-phospho-DNA)-tyrosine intermediate is tyrosine 123. A GyrA-box motif is present at residues 551–557 (QKRGGKG). Residues 885-905 (TAESEEDSELEEEGLEQSEEV) are disordered. Residues 886–905 (AESEEDSELEEEGLEQSEEV) show a composition bias toward acidic residues.

Belongs to the type II topoisomerase GyrA/ParC subunit family. In terms of assembly, heterotetramer, composed of two GyrA and two GyrB chains. In the heterotetramer, GyrA contains the active site tyrosine that forms a transient covalent intermediate with DNA, while GyrB binds cofactors and catalyzes ATP hydrolysis.

It localises to the cytoplasm. The catalysed reaction is ATP-dependent breakage, passage and rejoining of double-stranded DNA.. Its function is as follows. A type II topoisomerase that negatively supercoils closed circular double-stranded (ds) DNA in an ATP-dependent manner to modulate DNA topology and maintain chromosomes in an underwound state. Negative supercoiling favors strand separation, and DNA replication, transcription, recombination and repair, all of which involve strand separation. Also able to catalyze the interconversion of other topological isomers of dsDNA rings, including catenanes and knotted rings. Type II topoisomerases break and join 2 DNA strands simultaneously in an ATP-dependent manner. The protein is DNA gyrase subunit A of Rickettsia conorii (strain ATCC VR-613 / Malish 7).